The chain runs to 348 residues: Phosphatidylinositol 3,4,5-trisphosphate 3-phosphatase ptn1 (348 aa).

In terms of domain architecture, Phosphatase tensin-type spans 18–189; it reads EKVNRSFAYL…YYIEILKQFP (172 aa). The active-site Phosphocysteine intermediate is the Cys129.

The protein localises to the cytoplasmic vesicle. It carries out the reaction a 1,2-diacyl-sn-glycero-3-phospho-(1D-myo-inositol-3,4,5-trisphosphate) + H2O = a 1,2-diacyl-sn-glycero-3-phospho-(1D-myo-inositol-4,5-bisphosphate) + phosphate. The catalysed reaction is 1,2-dioctanoyl-sn-glycero-3-phospho-(1D-myo-inositol-3,4,5-trisphosphate) + H2O = 1,2-dioctanoyl-sn-glycero-3-phospho-(1D-myo-inositol-4,5-bisphosphate) + phosphate. It catalyses the reaction 1,2-dihexadecanoyl-sn-glycero-3-phospho-(1D-myo-inositol-3,4,5-trisphosphate) + H2O = 1,2-dihexadecanoyl-sn-glycero-3-phospho-(1D-myo-inositol-4,5-bisphosphate) + phosphate. Its function is as follows. Acts as a phosphoinositide 3-phosphatase and regulates PtdIns(3,4,5)P3 levels. In Schizosaccharomyces pombe (strain 972 / ATCC 24843) (Fission yeast), this protein is Phosphatidylinositol 3,4,5-trisphosphate 3-phosphatase ptn1 (ptn1).